We begin with the raw amino-acid sequence, 284 residues long: MQLIDGKAISAKVKEEVKNEAAQLTEKGVVPCLAVILVGDDKASQTYVNSKEKACKACGIRSLKYTLEANTSESALIDLIQSLNENDEVDGILVQLPLPKHIDENKILEKISCEKDVDGFHAVNVGRLVSGLDGFVPCTPCGIMRLFKEYDIEISGKNAVVIGRSNIVGKPMANLLLNANATVTVTHSKTQNLAKITKDADIIVVAIGKPNFLKADMVKNGAVVIDVGINRLENNKLVGDADFENVANKCSFITPVPGGVGPMTIAMLLKNTIKSAKNRLKRLK.

NADP(+) is bound by residues 163-165 (GRS), serine 188, and isoleucine 229.

The protein belongs to the tetrahydrofolate dehydrogenase/cyclohydrolase family. Homodimer.

It carries out the reaction (6R)-5,10-methylene-5,6,7,8-tetrahydrofolate + NADP(+) = (6R)-5,10-methenyltetrahydrofolate + NADPH. The catalysed reaction is (6R)-5,10-methenyltetrahydrofolate + H2O = (6R)-10-formyltetrahydrofolate + H(+). Its pathway is one-carbon metabolism; tetrahydrofolate interconversion. Catalyzes the oxidation of 5,10-methylenetetrahydrofolate to 5,10-methenyltetrahydrofolate and then the hydrolysis of 5,10-methenyltetrahydrofolate to 10-formyltetrahydrofolate. The sequence is that of Bifunctional protein FolD from Campylobacter hominis (strain ATCC BAA-381 / DSM 21671 / CCUG 45161 / LMG 19568 / NCTC 13146 / CH001A).